The following is a 348-amino-acid chain: Phospho-2-dehydro-3-deoxyheptonate aldolase, Trp-sensitive (348 aa).

The protein belongs to the class-I DAHP synthase family.

It carries out the reaction D-erythrose 4-phosphate + phosphoenolpyruvate + H2O = 7-phospho-2-dehydro-3-deoxy-D-arabino-heptonate + phosphate. It participates in metabolic intermediate biosynthesis; chorismate biosynthesis; chorismate from D-erythrose 4-phosphate and phosphoenolpyruvate: step 1/7. In terms of biological role, stereospecific condensation of phosphoenolpyruvate (PEP) and D-erythrose-4-phosphate (E4P) giving rise to 3-deoxy-D-arabino-heptulosonate-7-phosphate (DAHP). The chain is Phospho-2-dehydro-3-deoxyheptonate aldolase, Trp-sensitive (aroH) from Escherichia coli (strain K12).